The primary structure comprises 87 residues: HssA/B-like protein 54 (87 aa).

It belongs to the hssA/B family.

The sequence is that of HssA/B-like protein 54 (hssl54) from Dictyostelium discoideum (Social amoeba).